The chain runs to 662 residues: Glycogen debranching enzyme (662 aa).

Catalysis depends on aspartate 338, which acts as the Nucleophile. Catalysis depends on glutamate 373, which acts as the Proton donor.

The protein belongs to the glycosyl hydrolase 13 family.

The catalysed reaction is Hydrolysis of (1-&gt;6)-alpha-D-glucosidic linkages to branches with degrees of polymerization of three or four glucose residues in limit dextrin.. Its pathway is glycan degradation; glycogen degradation. In terms of biological role, removes maltotriose and maltotetraose chains that are attached by 1,6-alpha-linkage to the limit dextrin main chain, generating a debranched limit dextrin. This chain is Glycogen debranching enzyme, found in Yersinia pestis bv. Antiqua (strain Angola).